The chain runs to 173 residues: Placenta-specific protein 1 (173 aa).

An N-terminal signal peptide occupies residues 1 to 23 (MNLRKFLGGTVLVAFMLFSYSEQ).

It belongs to the PLAC1 family. As to expression, expressed in placenta.

Its subcellular location is the secreted. In terms of biological role, may play a role in placental development. The sequence is that of Placenta-specific protein 1 from Mus musculus (Mouse).